The chain runs to 657 residues: Broad substrate specificity ATP-binding cassette transporter ABCG2 (657 aa).

Residues 1–24 are disordered; it reads MSSSNDHVLVPMSQRNNNGLPRTN. The Cytoplasmic portion of the chain corresponds to 1–393; it reads MSSSNDHVLV…SFKNLLGNPQ (393 aa). The segment covering 13–24 has biased composition (polar residues); that stretch reads SQRNNNGLPRTN. In terms of domain architecture, ABC transporter spans 48–285; it reads VKSGFLVRKT…FASAGYHCEP (238 aa). ATP contacts are provided by residues 79 to 86, 183 to 189, E210, and H242; these read GPTGGGKS and RGISGGE. An ABC transmembrane type-2 domain is found at 389–653; the sequence is LGNPQASVAQ…TIAYLKLLFL (265 aa). The helical transmembrane segment at 394 to 414 threads the bilayer; sequence ASVAQLIVTVILGLIIGAIYF. Topologically, residues 415 to 428 are extracellular; the sequence is DLKYDAAGMQNRAG. Residues 429-449 traverse the membrane as a helical segment; it reads VLFFLTTNQCFSSVSAVELFV. Topologically, residues 450–477 are cytoplasmic; the sequence is VEKKLFIHEYISGYYRVSSYFFGKVMSD. A helical transmembrane segment spans residues 478–498; it reads LLPMRFLPSVIFTCVLYFMLG. Topologically, residues 499–506 are extracellular; the sequence is LKKTVDAF. The chain crosses the membrane as a helical span at residues 507-527; that stretch reads FIMMFTLIMVAYTASSMALAI. Topologically, residues 528 to 535 are cytoplasmic; that stretch reads ATGQSVVS. A helical membrane pass occupies residues 536–556; that stretch reads VATLLMTIAFVFMMLFSGLLV. The Extracellular segment spans residues 557–632; that stretch reads NLRTIGPWLS…LSPWGLWKNH (76 aa). A disulfide bridge links C592 with C610. N-linked (GlcNAc...) asparagine glycans are attached at residues N596 and N600. A helical transmembrane segment spans residues 633–653; that stretch reads VALACMIIIFLTIAYLKLLFL. At 654–657 the chain is on the cytoplasmic side; it reads KKYS.

The protein belongs to the ABC transporter superfamily. ABCG family. Eye pigment precursor importer (TC 3.A.1.204) subfamily. As to quaternary structure, homodimer; disulfide-linked. The minimal functional unit is a homodimer, but the major oligomeric form in plasma membrane is a homotetramer with possibility of higher order oligomerization up to homododecamers. Post-translationally, N-glycosylated. Glycosylation-deficient ABCG2 is normally expressed and functional. Phosphorylated. Phosphorylation may regulate the localization to the plasma membrane, the homooligomerization and therefore, the activity of the transporter. In terms of tissue distribution, highly expressed in kidney. Lower expression in liver, colon, heart, spleen, and placenta. Expressed in mammary gland. Expressed in intestinal villi and renal proximal tubules, hepatic bile canalicular membranes, and placental labyrinth cells (at protein level).

The protein resides in the cell membrane. It is found in the apical cell membrane. Its subcellular location is the mitochondrion membrane. It carries out the reaction ATP + H2O + xenobioticSide 1 = ADP + phosphate + xenobioticSide 2.. The enzyme catalyses riboflavin(in) + ATP + H2O = riboflavin(out) + ADP + phosphate + H(+). It catalyses the reaction pheophorbide a(in) + ATP + H2O = pheophorbide a(out) + ADP + phosphate + H(+). The catalysed reaction is urate(in) + ATP + H2O = urate(out) + ADP + phosphate + H(+). It carries out the reaction indoxyl sulfate(in) + ATP + H2O = indoxyl sulfate(out) + ADP + phosphate + H(+). The enzyme catalyses sphing-4-enine 1-phosphate(in) + ATP + H2O = sphing-4-enine 1-phosphate(out) + ADP + phosphate + H(+). It catalyses the reaction estrone 3-sulfate(in) + ATP + H2O = estrone 3-sulfate(out) + ADP + phosphate + H(+). The catalysed reaction is dehydroepiandrosterone 3-sulfate(in) + ATP + H2O = dehydroepiandrosterone 3-sulfate(out) + ADP + phosphate + H(+). It carries out the reaction 4-methylumbelliferone sulfate(in) + ATP + H2O = 4-methylumbelliferone sulfate(out) + ADP + phosphate + H(+). The enzyme catalyses 5,7-dimethyl-2-methylamino-4-(3-pyridylmethyl)-1,3-benzothiazol-6-yl beta-D-glucuronate(in) + ATP + H2O = 5,7-dimethyl-2-methylamino-4-(3-pyridylmethyl)-1,3-benzothiazol-6-yl beta-D-glucuronate(out) + ADP + phosphate + H(+). It catalyses the reaction 4-methylumbelliferone beta-D-glucuronate(in) + ATP + H2O = 4-methylumbelliferone beta-D-glucuronate(out) + ADP + phosphate + H(+). The catalysed reaction is 5,7-dimethyl-2-methylamino-4-(3-pyridylmethyl)-1,3-benzothiazol-6-yl sulfate(in) + ATP + H2O = 5,7-dimethyl-2-methylamino-4-(3-pyridylmethyl)-1,3-benzothiazol-6-yl sulfate(out) + ADP + phosphate + H(+). It carries out the reaction 17beta-estradiol 17-O-(beta-D-glucuronate)(in) + ATP + H2O = 17beta-estradiol 17-O-(beta-D-glucuronate)(out) + ADP + phosphate + H(+). The enzyme catalyses methotrexate(in) + ATP + H2O = methotrexate(out) + ADP + phosphate + H(+). It catalyses the reaction itaconate(in) + ATP + H2O = itaconate(out) + ADP + phosphate + H(+). Its activity is regulated as follows. Specifically inhibited by the fungal toxin fumitremorgin C and Ko143. Broad substrate specificity ATP-dependent transporter of the ATP-binding cassette (ABC) family that actively extrudes a wide variety of physiological compounds, dietary toxins and xenobiotics from cells. Involved in porphyrin homeostasis, mediating the export of protoporphyrin IX (PPIX) from both mitochondria to cytosol and cytosol to extracellular space, it also functions in the cellular export of heme. Also mediates the efflux of sphingosine-1-P from cells. Acts as a urate exporter functioning in both renal and extrarenal urate excretion. In kidney, it also functions as a physiological exporter of the uremic toxin indoxyl sulfate. Also involved in the excretion of steroids like estrone 3-sulfate/E1S, 3beta-sulfooxy-androst-5-en-17-one/DHEAS, and other sulfate conjugates. Mediates the secretion of the riboflavin and biotin vitamins into milk. Extrudes pheophorbide a, a phototoxic porphyrin catabolite of chlorophyll, reducing its bioavailability. Plays an important role in the exclusion of xenobiotics from the brain. It confers to cells a resistance to multiple drugs and other xenobiotics including mitoxantrone, pheophorbide, camptothecin, methotrexate, azidothymidine, and the anthracyclines daunorubicin and doxorubicin, through the control of their efflux. In placenta, it limits the penetration of drugs from the maternal plasma into the fetus. May play a role in early stem cell self-renewal by blocking differentiation. In inflammatory macrophages, exports itaconate from the cytosol to the extracellular compartment and limits the activation of TFEB-dependent lysosome biogenesis involved in antibacterial innate immune response. This Mus musculus (Mouse) protein is Broad substrate specificity ATP-binding cassette transporter ABCG2 (Abcg2).